The following is a 477-amino-acid chain: Solute carrier family 2, facilitated glucose transporter member 8 (477 aa).

Over 1–25 the chain is Cytoplasmic; the sequence is MSPEDPQETQPLLRPPEARTPRGRR. Residues 12-13 carry the Dileucine internalization motif motif; it reads LL. The helical transmembrane segment at 26-46 threads the bilayer; that stretch reads VFLASFAAALGPLSFGFALGY. The Extracellular segment spans residues 47 to 70; it reads SSPAIPSLRRTAPPALRLGDNAAS. A helical membrane pass occupies residues 71-91; sequence WFGAVVTLGAAAGGILGGWLL. Over 92 to 96 the chain is Cytoplasmic; the sequence is DRAGR. Residues 97-117 traverse the membrane as a helical segment; it reads KLSLLLCTVPFVTGFAVITAA. The Extracellular portion of the chain corresponds to 118-127; that stretch reads RDVWMLLGGR. Residues 128-148 traverse the membrane as a helical segment; sequence LLTGLACGVASLVAPVYISEI. Over 149 to 156 the chain is Cytoplasmic; it reads AYPAVRGL. A helical transmembrane segment spans residues 157 to 177; sequence LGSCVQLMVVTGILLAYVAGW. Gln-162 contacts D-glucose. Over 178 to 182 the chain is Extracellular; sequence VLEWR. Residues 183 to 203 traverse the membrane as a helical segment; sequence WLAVLGCVPPTLMLLLMCYMP. Over 204-257 the chain is Cytoplasmic; sequence ETPRFLLTQHQYQEAMAALRFLWGSEEGWEEPPVGAEHQGFQLALLRRPGIYKP. A helical membrane pass occupies residues 258–278; it reads LIIGISLMVFQQLSGVNAIMF. Residues 268-269 and Asn-274 contribute to the D-glucose site; that span reads QQ. Residues 279-293 are Extracellular-facing; it reads YANSIFEEAKFKDSS. Residues 294-314 form a helical membrane-spanning segment; sequence LASVTVGIIQVLFTAVAALIM. Over 315–320 the chain is Cytoplasmic; the sequence is DRAGRR. The helical transmembrane segment at 321-341 threads the bilayer; that stretch reads LLLALSGVIMVFSMSAFGTYF. The Extracellular portion of the chain corresponds to 342–367; the sequence is KLTQSLPSNSSHVGLVPIAAEPVDVQ. A glycan (N-linked (GlcNAc...) asparagine) is linked at Asn-350. The chain crosses the membrane as a helical span at residues 368 to 388; that stretch reads VGLAWLAVGSMCLFIAGFAVG. At 389 to 404 the chain is on the cytoplasmic side; it reads WGPIPWLLMSEIFPLH. Trp-394 is a D-glucose binding site. The chain crosses the membrane as a helical span at residues 405-425; sequence VKGVATGICVLTNWFMAFLVT. The Extracellular portion of the chain corresponds to 426-438; that stretch reads KEFSSVMEMLRPY. Residues 439–459 form a helical membrane-spanning segment; sequence GAFWLTAAFCALSVLFTLTVV. Topologically, residues 460–477 are cytoplasmic; it reads PETKGRTLEQVTAHFEGR.

Belongs to the major facilitator superfamily. Sugar transporter (TC 2.A.1.1) family. Glucose transporter subfamily. As to quaternary structure, interacts with AP2B1. Also able to mediate the transport of dehydroascorbate. Highest level of expression in placenta and testis. Highly expressed in adult and pubertal testis, but not prepubertal testis. Lower levels of expression in brain, liver, heart, kidney, fat and skeletal muscle.

The protein localises to the cell membrane. The protein resides in the cytoplasmic vesicle membrane. It catalyses the reaction D-glucose(out) = D-glucose(in). The catalysed reaction is D-fructose(out) = D-fructose(in). The enzyme catalyses L-dehydroascorbate(out) = L-dehydroascorbate(in). It carries out the reaction alpha,alpha-trehalose(in) = alpha,alpha-trehalose(out). Inhibited by cytochalasin B. In terms of biological role, insulin-regulated facilitative hexose transporter that mediates the transport of glucose and fructose. Facilitates hepatic influx of dietary trehalose, which in turn inhibits glucose and fructose influx triggering a starvation signal and hepatic autophagy through activation of AMPK and ULK1. Also able to mediate the transport of dehydroascorbate. This Mus musculus (Mouse) protein is Solute carrier family 2, facilitated glucose transporter member 8.